The chain runs to 147 residues: Hemoglobin subunit delta (147 aa).

Positions 3–147 constitute a Globin domain; the sequence is HLTPDEKNAV…VATALAHKYH (145 aa). S51 bears the Phosphoserine mark. The heme b site is built by H64 and H93.

Belongs to the globin family. In terms of assembly, heterotetramer of two delta chains and two alpha chains. In terms of tissue distribution, red blood cells.

In Otolemur crassicaudatus (Brown greater galago), this protein is Hemoglobin subunit delta (HBD).